Consider the following 666-residue polypeptide: tRNA 5-methylaminomethyl-2-thiouridine biosynthesis bifunctional protein MnmC (666 aa).

The tract at residues 1-245 is tRNA (mnm(5)s(2)U34)-methyltransferase; the sequence is MKQYAIQPAT…KREMLCGVME (245 aa). Positions 270–666 are FAD-dependent cmnm(5)s(2)U34 oxidoreductase; the sequence is IGGGIASALL…RKLLKGKAVK (397 aa).

This sequence in the N-terminal section; belongs to the methyltransferase superfamily. tRNA (mnm(5)s(2)U34)-methyltransferase family. In the C-terminal section; belongs to the DAO family. FAD is required as a cofactor.

The protein resides in the cytoplasm. It carries out the reaction 5-aminomethyl-2-thiouridine(34) in tRNA + S-adenosyl-L-methionine = 5-methylaminomethyl-2-thiouridine(34) in tRNA + S-adenosyl-L-homocysteine + H(+). Its function is as follows. Catalyzes the last two steps in the biosynthesis of 5-methylaminomethyl-2-thiouridine (mnm(5)s(2)U) at the wobble position (U34) in tRNA. Catalyzes the FAD-dependent demodification of cmnm(5)s(2)U34 to nm(5)s(2)U34, followed by the transfer of a methyl group from S-adenosyl-L-methionine to nm(5)s(2)U34, to form mnm(5)s(2)U34. This chain is tRNA 5-methylaminomethyl-2-thiouridine biosynthesis bifunctional protein MnmC, found in Salmonella paratyphi A (strain ATCC 9150 / SARB42).